Reading from the N-terminus, the 140-residue chain is Natriuretic peptides B (140 aa).

Residues 1-26 form the signal peptide; it reads MEPCAALPRALLLLLFLHLSPLGGRP. Residues 71-94 form a disordered region; the sequence is LEPLHRSHSPAEAPEAGGTPRGVL. C118 and C134 are joined by a disulfide.

It belongs to the natriuretic peptide family. The precursor molecule is proteolytically cleaved by the endoproteases FURIN or CORIN at Arg-108 to produce the brain natriuretic peptide 32. CORIN also cleaves the precursor molecule at additional residues including Arg-105, Arg-108 and possibly Lys-111. Post-translationally, undergoes further proteolytic cleavage by various proteases such as DPP4, MME and possibly FAP, to give rise to a variety of shorter peptides. Cleaved at Pro-110 by the prolyl endopeptidase FAP (seprase) activity (in vitro). Degraded by IDE. During IDE degradation, the resulting products initially increase the activation of NPR1 and can also stimulate NPR2 to produce cGMP before the fragments are completely degraded and inactivated by IDE (in vitro). As to expression, brain and also in atria, but at much lower levels than ANP.

It localises to the secreted. Functionally, cardiac hormone that plays a key role in mediating cardio-renal homeostasis. May also function as a paracrine antifibrotic factor in the heart. Acts by specifically binding and stimulating NPR1 to produce cGMP, which in turn activates effector proteins that drive various biological responses. Involved in regulating the extracellular fluid volume and maintaining the fluid-electrolyte balance through natriuresis, diuresis, vasorelaxation, and inhibition of renin and aldosterone secretion. Binds the clearance receptor NPR3. Its function is as follows. May affect cardio-renal homeostasis. Able to promote the production of cGMP although its potency is very low compared to brain natriuretic peptide 32. The chain is Natriuretic peptides B (NPPB) from Canis lupus familiaris (Dog).